The chain runs to 476 residues: Glutamate--tRNA ligase 1 (476 aa).

Residues P9 to G19 carry the 'HIGH' region motif. Residues K238–R242 carry the 'KMSKS' region motif. K241 is an ATP binding site.

The protein belongs to the class-I aminoacyl-tRNA synthetase family. Glutamate--tRNA ligase type 1 subfamily. As to quaternary structure, monomer.

It localises to the cytoplasm. It catalyses the reaction tRNA(Glu) + L-glutamate + ATP = L-glutamyl-tRNA(Glu) + AMP + diphosphate. Catalyzes the attachment of glutamate to tRNA(Glu) in a two-step reaction: glutamate is first activated by ATP to form Glu-AMP and then transferred to the acceptor end of tRNA(Glu). This is Glutamate--tRNA ligase 1 from Bartonella bacilliformis (strain ATCC 35685 / KC583 / Herrer 020/F12,63).